A 529-amino-acid chain; its full sequence is Bifunctional purine biosynthesis protein PurH (529 aa).

An MGS-like domain is found at 1–148 (MQQRRPIRRA…KNHKDVAIVV (148 aa)).

This sequence belongs to the PurH family.

It catalyses the reaction (6R)-10-formyltetrahydrofolate + 5-amino-1-(5-phospho-beta-D-ribosyl)imidazole-4-carboxamide = 5-formamido-1-(5-phospho-D-ribosyl)imidazole-4-carboxamide + (6S)-5,6,7,8-tetrahydrofolate. It carries out the reaction IMP + H2O = 5-formamido-1-(5-phospho-D-ribosyl)imidazole-4-carboxamide. Its pathway is purine metabolism; IMP biosynthesis via de novo pathway; 5-formamido-1-(5-phospho-D-ribosyl)imidazole-4-carboxamide from 5-amino-1-(5-phospho-D-ribosyl)imidazole-4-carboxamide (10-formyl THF route): step 1/1. The protein operates within purine metabolism; IMP biosynthesis via de novo pathway; IMP from 5-formamido-1-(5-phospho-D-ribosyl)imidazole-4-carboxamide: step 1/1. The polypeptide is Bifunctional purine biosynthesis protein PurH (Yersinia enterocolitica serotype O:8 / biotype 1B (strain NCTC 13174 / 8081)).